The primary structure comprises 315 residues: Spermidine synthase 1 (315 aa).

A PABS domain is found at 25–262 (PGWFSEISPL…GMIGFMLCST (238 aa)). An S-adenosyl 3-(methylsulfanyl)propylamine-binding site is contributed by Q56. A putrescine-binding site is contributed by Y86. Residues Q87, D111, E131, 162 to 163 (DG), and D181 contribute to the S-adenosyl 3-(methylsulfanyl)propylamine site. D181 functions as the Proton acceptor in the catalytic mechanism. Putrescine-binding positions include 181-184 (DSSD) and Y250.

The protein belongs to the spermidine/spermine synthase family.

It carries out the reaction S-adenosyl 3-(methylsulfanyl)propylamine + putrescine = S-methyl-5'-thioadenosine + spermidine + H(+). It participates in amine and polyamine biosynthesis; spermidine biosynthesis; spermidine from putrescine: step 1/1. In Hyoscyamus niger (Black henbane), this protein is Spermidine synthase 1.